We begin with the raw amino-acid sequence, 461 residues long: Probable tubulin polyglutamylase TTLL9 (461 aa).

Positions 1–10 are enriched in polar residues; sequence MSRQKNQNSK. The disordered stretch occupies residues 1-20; sequence MSRQKNQNSKGHGVSKGKER. In terms of domain architecture, TTL spans 22-402; that stretch reads QRTLIRFKTT…EARLTGKEKR (381 aa). ATP-binding positions include Lys-149 and 155–156; that span reads QG. Gln-155 contributes to the a protein binding site. The tract at residues 172–208 is disordered; the sequence is RKGTSGKKPTGVETQPARANMNPSGSHDTRSSDDQKD. Residues 198-208 are compositionally biased toward basic and acidic residues; the sequence is HDTRSSDDQKD. Residues 218–221 and 231–233 each bind ATP; these read QRYV and KFD. Residue Arg-257 coordinates L-glutamate. 276–277 contributes to the ATP binding site; sequence TN. Lys-294 contacts L-glutamate. Positions 348, 361, and 363 each coordinate Mg(2+). L-glutamate is bound at residue Lys-379.

Belongs to the tubulin--tyrosine ligase family. It depends on Mg(2+) as a cofactor. As to expression, highly expressed in brain and testis. Expressed in heart, kidney and lung. In the brain, expressed in ependymal cilia, cortex, corpus callosum and striatum. In the testis, specifically expressed in the seminiferous tubules.

It is found in the cytoplasm. The protein localises to the cytoskeleton. The protein resides in the cilium basal body. Its subcellular location is the flagellum axoneme. It carries out the reaction (L-glutamyl)(n)-gamma-L-glutamyl-L-glutamyl-[protein] + L-glutamate + ATP = (L-glutamyl)(n+1)-gamma-L-glutamyl-L-glutamyl-[protein] + ADP + phosphate + H(+). Functionally, probable tubulin polyglutamylase that generates side chains of glutamate on the gamma-carboxyl group of specific glutamate residues within the C-terminal tail of target proteins. Similar to TTLL1, may acquire enzymatic activity only in complex with other proteins as it is most likely lacking domains important for autonomous activity. Mediates tubulin polyglutamylation which induces establishment of microtubule heterogeneity in sperm flagella, thereby playing a role in normal motile flagella axoneme structure and sperm flagella beating pattern. The protein is Probable tubulin polyglutamylase TTLL9 of Mus musculus (Mouse).